A 665-amino-acid chain; its full sequence is Methionine--tRNA ligase (665 aa).

Residues 16–26 (YYPSGKAHIGH) carry the 'HIGH' region motif. The 'KMSKS' region motif lies at 311–315 (KMSKS). Residue Lys314 participates in ATP binding. In terms of domain architecture, tRNA-binding spans 564 to 665 (DFDKIDLRVA…SALPNGAKVK (102 aa)).

This sequence belongs to the class-I aminoacyl-tRNA synthetase family. MetG type 2B subfamily. As to quaternary structure, homodimer.

It is found in the cytoplasm. The enzyme catalyses tRNA(Met) + L-methionine + ATP = L-methionyl-tRNA(Met) + AMP + diphosphate. Its function is as follows. Is required not only for elongation of protein synthesis but also for the initiation of all mRNA translation through initiator tRNA(fMet) aminoacylation. This Listeria monocytogenes serotype 4b (strain F2365) protein is Methionine--tRNA ligase.